The primary structure comprises 455 residues: Argininosuccinate synthase (455 aa).

ATP contacts are provided by residues 17–25 (AFSGGLDTS) and Ala43. Residue Tyr99 participates in L-citrulline binding. The ATP site is built by Gly129 and Thr131. Positions 131, 135, and 136 each coordinate L-aspartate. Asn135 contacts L-citrulline. Asp136 contributes to the ATP binding site. The L-citrulline site is built by Arg139 and Ser192. Position 194 (Asp194) interacts with ATP. Positions 201, 203, and 280 each coordinate L-citrulline. Residues 434–448 (TGLPQVDNNNLSSGR) show a composition bias toward polar residues. The segment at 434-455 (TGLPQVDNNNLSSGRGLQDKRQ) is disordered.

This sequence belongs to the argininosuccinate synthase family. Type 2 subfamily. In terms of assembly, homotetramer.

Its subcellular location is the cytoplasm. The catalysed reaction is L-citrulline + L-aspartate + ATP = 2-(N(omega)-L-arginino)succinate + AMP + diphosphate + H(+). It participates in amino-acid biosynthesis; L-arginine biosynthesis; L-arginine from L-ornithine and carbamoyl phosphate: step 2/3. This chain is Argininosuccinate synthase (argG), found in Yersinia pestis.